A 344-amino-acid polypeptide reads, in one-letter code: Protein RecA (344 aa).

65 to 72 contributes to the ATP binding site; sequence GPESSGKT.

The protein belongs to the RecA family.

The protein localises to the cytoplasm. Can catalyze the hydrolysis of ATP in the presence of single-stranded DNA, the ATP-dependent uptake of single-stranded DNA by duplex DNA, and the ATP-dependent hybridization of homologous single-stranded DNAs. It interacts with LexA causing its activation and leading to its autocatalytic cleavage. The protein is Protein RecA of Nitratiruptor sp. (strain SB155-2).